The sequence spans 195 residues: HTH-type transcriptional regulator BetI (195 aa).

The 61-residue stretch at P8–L68 folds into the HTH tetR-type domain. A DNA-binding region (H-T-H motif) is located at residues S31–F50.

Its pathway is amine and polyamine biosynthesis; betaine biosynthesis via choline pathway [regulation]. In terms of biological role, repressor involved in the biosynthesis of the osmoprotectant glycine betaine. It represses transcription of the choline transporter BetT and the genes of BetAB involved in the synthesis of glycine betaine. The chain is HTH-type transcriptional regulator BetI from Pectobacterium carotovorum subsp. carotovorum (strain PC1).